The primary structure comprises 831 residues: Phosphoinositide phosphatase SAC4 (831 aa).

The SAC domain maps to 162–551 (LCMVDLTKDF…GDTLAYQYGG (390 aa)). The disordered stretch occupies residues 439–475 (SDADTSPHNSSDDDSRDYDSLEKNCRPSKNVANGDYD). A compositionally biased stretch (basic and acidic residues) spans 448–463 (SSDDDSRDYDSLEKNC). The Phosphatase catalytic core motif lies at 487–498 (RTNCIDCLDRTN). Residues 785–805 (PAMRESGSSSRKGKEPVETEL) form a disordered region. Basic and acidic residues predominate over residues 796–805 (KGKEPVETEL).

Component of the PI(3,5)P2 regulatory complex at least composed of ATG18, SAC/FIG4, FAB1 and VAC14. It depends on Mg(2+) as a cofactor. As to expression, ubiquitous with a higher level of expression in young seedlings than in other tissues.

It is found in the vacuole membrane. The catalysed reaction is a 1,2-diacyl-sn-glycero-3-phospho-(1D-myo-inositol-3,5-bisphosphate) + H2O = a 1,2-diacyl-sn-glycero-3-phospho-(1D-myo-inositol-3-phosphate) + phosphate. Its function is as follows. The PI(3,5)P2 regulatory complex regulates both the synthesis and turnover of phosphatidylinositol 3,5-bisphosphate (PtdIns(3,5)P2). The chain is Phosphoinositide phosphatase SAC4 (SAC4) from Arabidopsis thaliana (Mouse-ear cress).